We begin with the raw amino-acid sequence, 1241 residues long: ATP-dependent helicase/nuclease subunit A (1241 aa).

A UvrD-like helicase ATP-binding domain is found at Ser-12–Arg-485. Residue Ala-33–Thr-40 coordinates ATP. One can recognise a UvrD-like helicase C-terminal domain in the interval Gly-505 to Gly-805.

Belongs to the helicase family. AddA subfamily. In terms of assembly, heterodimer of AddA and AddB/RexB. The cofactor is Mg(2+).

The enzyme catalyses Couples ATP hydrolysis with the unwinding of duplex DNA by translocating in the 3'-5' direction.. The catalysed reaction is ATP + H2O = ADP + phosphate + H(+). In terms of biological role, the heterodimer acts as both an ATP-dependent DNA helicase and an ATP-dependent, dual-direction single-stranded exonuclease. Recognizes the chi site generating a DNA molecule suitable for the initiation of homologous recombination. The AddA nuclease domain is required for chi fragment generation; this subunit has the helicase and 3' -&gt; 5' nuclease activities. The polypeptide is ATP-dependent helicase/nuclease subunit A (Bacillus cereus (strain ATCC 10987 / NRS 248)).